The sequence spans 203 residues: Monothiol glutaredoxin-7 (203 aa).

Residues M1–A32 form the signal peptide. One can recognise a Glutaredoxin domain in the interval A88–A191. C108 is a binding site for [2Fe-2S] cluster.

This sequence belongs to the glutaredoxin family. Monothiol subfamily.

The protein is Monothiol glutaredoxin-7 (GRX7) of Saccharomyces cerevisiae (strain ATCC 204508 / S288c) (Baker's yeast).